Reading from the N-terminus, the 215-residue chain is Rho-related GTP-binding protein RhoF (215 aa).

The residue at position 1 (Met1) is an N-acetylmethionine. GTP is bound at residue 30–37; the sequence is GDGGCGKT. The Effector region motif lies at 52-60; that stretch reads YAPSVFEKY. GTP contacts are provided by residues 77 to 81 and 135 to 138; these read DTAGQ and CKTD. Cys212 bears the Cysteine methyl ester mark. Cys212 carries S-geranylgeranyl cysteine lipidation. Positions 213–215 are cleaved as a propeptide — removed in mature form; it reads LLL.

This sequence belongs to the small GTPase superfamily. Rho family.

The protein localises to the cell membrane. It is found in the cytoplasm. It localises to the cytoskeleton. Its function is as follows. Plasma membrane-associated small GTPase which cycles between an active GTP-bound and an inactive GDP-bound state. Causes the formation of thin, actin-rich surface projections called filopodia. Functions cooperatively with CDC42 and Rac to generate additional structures, increasing the diversity of actin-based morphology. The chain is Rho-related GTP-binding protein RhoF (RHOF) from Bos taurus (Bovine).